Consider the following 158-residue polypeptide: Transcription elongation factor GreA (158 aa).

The protein belongs to the GreA/GreB family.

Functionally, necessary for efficient RNA polymerase transcription elongation past template-encoded arresting sites. The arresting sites in DNA have the property of trapping a certain fraction of elongating RNA polymerases that pass through, resulting in locked ternary complexes. Cleavage of the nascent transcript by cleavage factors such as GreA or GreB allows the resumption of elongation from the new 3'terminus. GreA releases sequences of 2 to 3 nucleotides. In Zymomonas mobilis subsp. mobilis (strain ATCC 31821 / ZM4 / CP4), this protein is Transcription elongation factor GreA.